The chain runs to 344 residues: Ketol-acid reductoisomerase (NADP(+)) (344 aa).

The KARI N-terminal Rossmann domain occupies 1–181; it reads MATMYYEQNI…GAARGGLLET (181 aa). Residues 25-28, Arg-48, Ser-52, and 82-85 each bind NADP(+); these read YGSQ and DERQ. The active site involves His-107. An NADP(+)-binding site is contributed by Gly-133. A KARI C-terminal knotted domain is found at 182 to 327; sequence TFKEETETDL…AKLREMMPFI (146 aa). Residues Asp-190, Glu-194, Glu-226, and Glu-230 each coordinate Mg(2+). Position 251 (Ser-251) interacts with substrate.

Belongs to the ketol-acid reductoisomerase family. It depends on Mg(2+) as a cofactor.

The catalysed reaction is (2R)-2,3-dihydroxy-3-methylbutanoate + NADP(+) = (2S)-2-acetolactate + NADPH + H(+). It catalyses the reaction (2R,3R)-2,3-dihydroxy-3-methylpentanoate + NADP(+) = (S)-2-ethyl-2-hydroxy-3-oxobutanoate + NADPH + H(+). It functions in the pathway amino-acid biosynthesis; L-isoleucine biosynthesis; L-isoleucine from 2-oxobutanoate: step 2/4. The protein operates within amino-acid biosynthesis; L-valine biosynthesis; L-valine from pyruvate: step 2/4. In terms of biological role, involved in the biosynthesis of branched-chain amino acids (BCAA). Catalyzes an alkyl-migration followed by a ketol-acid reduction of (S)-2-acetolactate (S2AL) to yield (R)-2,3-dihydroxy-isovalerate. In the isomerase reaction, S2AL is rearranged via a Mg-dependent methyl migration to produce 3-hydroxy-3-methyl-2-ketobutyrate (HMKB). In the reductase reaction, this 2-ketoacid undergoes a metal-dependent reduction by NADPH to yield (R)-2,3-dihydroxy-isovalerate. The polypeptide is Ketol-acid reductoisomerase (NADP(+)) (Lysinibacillus sphaericus (strain C3-41)).